Reading from the N-terminus, the 124-residue chain is V-type proton ATPase subunit F 1 (124 aa).

The protein belongs to the V-ATPase F subunit family. V-ATPase is a heteromultimeric enzyme made up of two complexes: the ATP-hydrolytic V1 complex and the proton translocation V0 complex. The V1 complex consists of three catalytic AB heterodimers that form a heterohexamer, three peripheral stalks each consisting of EG heterodimers, one central rotor including subunits D and F, and the regulatory subunits C and H. The proton translocation complex V0 consists of the proton transport subunit a, a ring of proteolipid subunits c9c'', rotary subunit d, subunits e and f, and the accessory subunits VhaAC45 and ATP6AP2.

Functionally, subunit of the V1 complex of vacuolar(H+)-ATPase (V-ATPase), a multisubunit enzyme composed of a peripheral complex (V1) that hydrolyzes ATP and a membrane integral complex (V0) that translocates protons. V-ATPase is responsible for acidifying and maintaining the pH of intracellular compartments and in some cell types, is targeted to the plasma membrane, where it is responsible for acidifying the extracellular environment. The chain is V-type proton ATPase subunit F 1 (Vha14) from Drosophila pseudoobscura pseudoobscura (Fruit fly).